The sequence spans 441 residues: MEASFVQTTMALGLSSKKASSRNVAVERRNLITVCRFSVKTLLEKYTTEPIDDSSEEFVNFAAILEQILSHRFKGPVSWFSSDGQRGFWDYIRLACSKVPNNCVSSIENMENISTARAKGRAWIRVALMEKRMSEYITTALRDTRTTRRFYDSGAIMMREEATVLTGMLIGLSAIDFSFCLKGEVLDGKTPVVIDYTPYLKFTQSYDYLTDEEERHSAESSTSEDNSPEHPYLPLVTDEDSWYSKWHKMEQKFRIVYAQKGYLEELVRLRESQLKDLEAENRRLQLQLEEAAAQNQREKRELEGVILELQEQLTGLIPGDHAPLAQGSKDLTTRLVNQWPSLGTLSGAEGANNPKLYRRHSFMSTEPLSAEASLSSDSQRLGEGKRDEEPWGPIGKDPTPSMLGLCGSLASIPSCKSLASFKSNECLVSDSPEGSPALSPS.

Residues 1–293 (MEASFVQTTM…LQLQLEEAAA (293 aa)) are interaction with RAP2A. One can recognise an RUN domain in the interval 52-184 (DDSSEEFVNF…IDFSFCLKGE (133 aa)). Position 210 is a phosphothreonine (threonine 210). The disordered stretch occupies residues 211–234 (DEEERHSAESSTSEDNSPEHPYLP). Serine 227 carries the phosphoserine modification. Residues 262–317 (YLEELVRLRESQLKDLEAENRRLQLQLEEAAAQNQREKRELEGVILELQEQLTGLI) adopt a coiled-coil conformation. Over residues 367–379 (PLSAEASLSSDSQ) the composition is skewed to polar residues. A disordered region spans residues 367 to 399 (PLSAEASLSSDSQRLGEGKRDEEPWGPIGKDPT). The segment covering 380–389 (RLGEGKRDEE) has biased composition (basic and acidic residues). 2 positions are modified to phosphoserine: serine 411 and serine 414.

This sequence belongs to the RUNDC3 family. As to quaternary structure, interacts with the GTP-bound form of RAP2A.

Its function is as follows. May act as an effector of RAP2A in neuronal cells. This chain is RUN domain-containing protein 3A (RUNDC3A), found in Bos taurus (Bovine).